Here is a 333-residue protein sequence, read N- to C-terminus: Cap-specific mRNA (nucleoside-2'-O-)-methyltransferase (333 aa).

Tyr22 contacts mRNA. 8 residues coordinate S-adenosyl-L-methionine: Gln39, Tyr66, Gly68, Gly72, Asp95, Arg97, Val116, and Asp138. The interval Pro169 to Ile249 is binding to NPH-I. Lys175 acts as the For methyltransferase activity in catalysis. Residues Arg177 to Phe180, Asp182, Ser205 to Glu207, and Glu233 contribute to the mRNA site. Residues Ser305 to Ser320 show a composition bias toward basic and acidic residues. The tract at residues Ser305 to Lys333 is disordered. Residues Arg323–Lys333 show a composition bias toward basic residues.

It belongs to the class I-like SAM-binding methyltransferase superfamily. Poxvirus/kinetoplastid 2'-O-MTase family. In terms of assembly, interacts with poly(A) polymerase catalytic subunit OPG063. Interacts with OPG109 and OPG123; these interactions might help linking transcription to capping and polyadenylation.

It is found in the virion. The catalysed reaction is a 5'-end (N(7)-methyl 5'-triphosphoguanosine)-ribonucleoside in mRNA + S-adenosyl-L-methionine = a 5'-end (N(7)-methyl 5'-triphosphoguanosine)-(2'-O-methyl-ribonucleoside) in mRNA + S-adenosyl-L-homocysteine + H(+). Displays methyltransferase, positive regulation of the poly(A) polymerase and transcription elongation activities. Involved in the modification of both mRNA ends and in intermediate and late gene positive transcription elongation. At the mRNAs 5' end, methylates the ribose 2' OH group of the first transcribed nucleotide, thereby producing a 2'-O-methylpurine cap. At the 3' end, functions as a processivity factor which stimulates the activity of the viral poly(A) polymerase OPG063 that creates mRNA's poly(A) tail. In the presence of OPG102, OPG063 does not dissociate from the RNA allowing tail elongation to around 250 adenylates. The sequence is that of Cap-specific mRNA (nucleoside-2'-O-)-methyltransferase (OPG102) from Cynomys gunnisoni (Gunnison's prairie dog).